The primary structure comprises 1099 residues: Carbamoyl phosphate synthase large chain (1099 aa).

Residues 1–402 are carboxyphosphate synthetic domain; the sequence is MPKREDIKRI…ALGKALRSLE (402 aa). ATP-binding residues include Arg-129, Arg-169, Gly-175, Gly-176, Glu-208, Val-210, Glu-215, Gly-241, Ile-242, His-243, Gln-285, and Glu-299. One can recognise an ATP-grasp 1 domain in the interval 133 to 328; the sequence is KETMEKAGLE…IAKVAALLAV (196 aa). Mg(2+) is bound by residues Gln-285, Glu-299, and Asn-301. The Mn(2+) site is built by Gln-285, Glu-299, and Asn-301. Residues 403–541 are oligomerization domain; that stretch reads LDAAPKLDLE…STYNGVENEA (139 aa). Residues 542 to 944 are carbamoyl phosphate synthetic domain; that stretch reads VPSDREKIMI…AFAKAQIAAG (403 aa). An ATP-grasp 2 domain is found at 666–857; the sequence is AKLLKQIGLK…VARIAAKIMV (192 aa). ATP-binding residues include Arg-702, Lys-741, Leu-743, Glu-748, Gly-773, Val-774, His-775, Ser-776, Gln-816, and Glu-828. Mg(2+)-binding residues include Gln-816, Glu-828, and Asn-830. Mn(2+) is bound by residues Gln-816, Glu-828, and Asn-830. Residues 945 to 1099 form the MGS-like domain; that stretch reads NPLPTTGAIL…VRRLTDTWKM (155 aa). Residues 945-1099 are allosteric domain; it reads NPLPTTGAIL…VRRLTDTWKM (155 aa).

It belongs to the CarB family. Composed of two chains; the small (or glutamine) chain promotes the hydrolysis of glutamine to ammonia, which is used by the large (or ammonia) chain to synthesize carbamoyl phosphate. Tetramer of heterodimers (alpha,beta)4. It depends on Mg(2+) as a cofactor. Mn(2+) is required as a cofactor.

It catalyses the reaction hydrogencarbonate + L-glutamine + 2 ATP + H2O = carbamoyl phosphate + L-glutamate + 2 ADP + phosphate + 2 H(+). The catalysed reaction is hydrogencarbonate + NH4(+) + 2 ATP = carbamoyl phosphate + 2 ADP + phosphate + 2 H(+). Its pathway is amino-acid biosynthesis; L-arginine biosynthesis; carbamoyl phosphate from bicarbonate: step 1/1. It participates in pyrimidine metabolism; UMP biosynthesis via de novo pathway; (S)-dihydroorotate from bicarbonate: step 1/3. Its function is as follows. Large subunit of the glutamine-dependent carbamoyl phosphate synthetase (CPSase). CPSase catalyzes the formation of carbamoyl phosphate from the ammonia moiety of glutamine, carbonate, and phosphate donated by ATP, constituting the first step of 2 biosynthetic pathways, one leading to arginine and/or urea and the other to pyrimidine nucleotides. The large subunit (synthetase) binds the substrates ammonia (free or transferred from glutamine from the small subunit), hydrogencarbonate and ATP and carries out an ATP-coupled ligase reaction, activating hydrogencarbonate by forming carboxy phosphate which reacts with ammonia to form carbamoyl phosphate. The chain is Carbamoyl phosphate synthase large chain from Thermotoga sp. (strain RQ2).